The sequence spans 298 residues: N-acetylmuramic acid 6-phosphate etherase 2 (298 aa).

The SIS domain maps to 51 to 214 (IVSRFEQGGR…STAAMVRLGR (164 aa)). Glu79 acts as the Proton donor in catalysis. Glu110 is an active-site residue.

This sequence belongs to the GCKR-like family. MurNAc-6-P etherase subfamily. As to quaternary structure, homodimer.

It carries out the reaction N-acetyl-D-muramate 6-phosphate + H2O = N-acetyl-D-glucosamine 6-phosphate + (R)-lactate. It functions in the pathway amino-sugar metabolism; N-acetylmuramate degradation. Functionally, specifically catalyzes the cleavage of the D-lactyl ether substituent of MurNAc 6-phosphate, producing GlcNAc 6-phosphate and D-lactate. In Bacillus licheniformis (strain ATCC 14580 / DSM 13 / JCM 2505 / CCUG 7422 / NBRC 12200 / NCIMB 9375 / NCTC 10341 / NRRL NRS-1264 / Gibson 46), this protein is N-acetylmuramic acid 6-phosphate etherase 2.